We begin with the raw amino-acid sequence, 1064 residues long: Isoleucine--tRNA ligase, cytoplasmic (1064 aa).

Residues 42 to 52 (PFATGRPHHGH) carry the 'HIGH' region motif. The short motif at 597-601 (KMSKR) is the 'KMSKS' region element. Lys600 serves as a coordination point for ATP.

This sequence belongs to the class-I aminoacyl-tRNA synthetase family.

It is found in the cytoplasm. It carries out the reaction tRNA(Ile) + L-isoleucine + ATP = L-isoleucyl-tRNA(Ile) + AMP + diphosphate. The chain is Isoleucine--tRNA ligase, cytoplasmic (irs1) from Schizosaccharomyces pombe (strain 972 / ATCC 24843) (Fission yeast).